A 184-amino-acid chain; its full sequence is GTP cyclohydrolase 1 (184 aa).

Zn(2+) contacts are provided by cysteine 75, histidine 78, and cysteine 146.

Belongs to the GTP cyclohydrolase I family. As to quaternary structure, homomer.

The enzyme catalyses GTP + H2O = 7,8-dihydroneopterin 3'-triphosphate + formate + H(+). The protein operates within cofactor biosynthesis; 7,8-dihydroneopterin triphosphate biosynthesis; 7,8-dihydroneopterin triphosphate from GTP: step 1/1. In Coxiella burnetii (strain Dugway 5J108-111), this protein is GTP cyclohydrolase 1.